We begin with the raw amino-acid sequence, 217 residues long: MNQTLLSSFGTPFERVENALAALREGRGVMVLDDEDRENEGDMIFPAETMTVEQMALTIRHGSGIVCLCITEDRRKQLDLPMMVENNTSAYGTGFTVTIEAAEGVTTGVSAADRITTVRAAIADDAKPSDLNRPGHVFPLRAQAGGVLTRGGHTEATIDLMTLAGFKPAGVLCELTNDDGTMARAPECIEFANKHNMALVTIEDLVAYRQAHERKAS.

D-ribulose 5-phosphate is bound by residues 37 to 38, D42, 150 to 154, and E174; these read RE and RGGHT. E38 serves as a coordination point for Mg(2+). H153 lines the Mg(2+) pocket.

Belongs to the DHBP synthase family. In terms of assembly, homodimer. Mg(2+) is required as a cofactor. It depends on Mn(2+) as a cofactor.

It catalyses the reaction D-ribulose 5-phosphate = (2S)-2-hydroxy-3-oxobutyl phosphate + formate + H(+). Its pathway is cofactor biosynthesis; riboflavin biosynthesis; 2-hydroxy-3-oxobutyl phosphate from D-ribulose 5-phosphate: step 1/1. In terms of biological role, catalyzes the conversion of D-ribulose 5-phosphate to formate and 3,4-dihydroxy-2-butanone 4-phosphate. The protein is 3,4-dihydroxy-2-butanone 4-phosphate synthase of Escherichia coli O17:K52:H18 (strain UMN026 / ExPEC).